The primary structure comprises 160 residues: Growth arrest and DNA damage-inducible protein GADD45 beta (160 aa).

This sequence belongs to the GADD45 family. In terms of assembly, interacts with GADD45GIP1.

In terms of biological role, involved in the regulation of growth and apoptosis. Mediates activation of stress-responsive MTK1/MEKK4 MAPKKK. This chain is Growth arrest and DNA damage-inducible protein GADD45 beta (GADD45B), found in Bos taurus (Bovine).